Here is a 241-residue protein sequence, read N- to C-terminus: Chalcone--flavanone isomerase C (241 aa).

3 residues coordinate substrate: Thr50, Asn115, and Ser192.

The protein belongs to the chalcone isomerase family.

The enzyme catalyses a chalcone = a flavanone.. Its pathway is secondary metabolite biosynthesis; flavonoid biosynthesis. In terms of biological role, catalyzes the intramolecular cyclization of bicyclic chalcones into tricyclic (S)-flavanones. Responsible for the isomerization of 4,2',4',6'-tetrahydroxychalcone (also termed chalcone) into naringenin. This Petunia hybrida (Petunia) protein is Chalcone--flavanone isomerase C (CHI3).